The sequence spans 392 residues: Cytochrome b (392 aa).

The next 4 membrane-spanning stretches (helical) occupy residues 38–58 (FGSL…FLAM), 82–104 (WLLR…LHIF), 119–139 (VRCL…TGYV), and 185–205 (FFSL…LHLA). Heme b contacts are provided by His-88 and His-102. Heme b contacts are provided by His-189 and His-203. His-208 contacts a ubiquinone. The next 4 helical transmembrane spans lie at 231 to 251 (FYVK…IWIF), 295 to 315 (SGGV…PFFK), 327 to 347 (IHQG…WIGC), and 354 to 373 (FVTI…AITP).

Belongs to the cytochrome b family. The main subunits of complex b-c1 are: cytochrome b, cytochrome c1 and the Rieske protein. Heme b is required as a cofactor.

Its subcellular location is the mitochondrion inner membrane. Functionally, component of the ubiquinol-cytochrome c reductase complex (complex III or cytochrome b-c1 complex) that is part of the mitochondrial respiratory chain. The b-c1 complex mediates electron transfer from ubiquinol to cytochrome c. Contributes to the generation of a proton gradient across the mitochondrial membrane that is then used for ATP synthesis. In Vicia faba (Broad bean), this protein is Cytochrome b (MT-CYB).